A 375-amino-acid chain; its full sequence is tRNA-specific 2-thiouridylase MnmA (375 aa).

Residues 9–16 (AMSGGVDS) and Leu35 contribute to the ATP site. The Nucleophile role is filled by Cys105. The cysteines at positions 105 and 201 are disulfide-linked. Gly129 is a binding site for ATP. Positions 151-153 (KNQ) are interaction with tRNA. The active-site Cysteine persulfide intermediate is Cys201. The tract at residues 307–308 (RY) is interaction with tRNA.

Belongs to the MnmA/TRMU family.

It localises to the cytoplasm. The enzyme catalyses S-sulfanyl-L-cysteinyl-[protein] + uridine(34) in tRNA + AH2 + ATP = 2-thiouridine(34) in tRNA + L-cysteinyl-[protein] + A + AMP + diphosphate + H(+). Functionally, catalyzes the 2-thiolation of uridine at the wobble position (U34) of tRNA, leading to the formation of s(2)U34. The sequence is that of tRNA-specific 2-thiouridylase MnmA from Leptospira interrogans serogroup Icterohaemorrhagiae serovar Lai (strain 56601).